We begin with the raw amino-acid sequence, 118 residues long: NADH-quinone oxidoreductase subunit A (118 aa).

Transmembrane regions (helical) follow at residues 8–28 (ILIF…LNYL), 61–81 (FMYA…YPWA), and 86–106 (VLGL…VLGL).

This sequence belongs to the complex I subunit 3 family. NDH-1 is composed of 14 different subunits. Subunits NuoA, H, J, K, L, M, N constitute the membrane sector of the complex.

The protein localises to the cell membrane. It carries out the reaction a quinone + NADH + 5 H(+)(in) = a quinol + NAD(+) + 4 H(+)(out). Its function is as follows. NDH-1 shuttles electrons from NADH, via FMN and iron-sulfur (Fe-S) centers, to quinones in the respiratory chain. The immediate electron acceptor for the enzyme in this species is believed to be a menaquinone. Couples the redox reaction to proton translocation (for every two electrons transferred, four hydrogen ions are translocated across the cytoplasmic membrane), and thus conserves the redox energy in a proton gradient. The protein is NADH-quinone oxidoreductase subunit A of Carboxydothermus hydrogenoformans (strain ATCC BAA-161 / DSM 6008 / Z-2901).